The sequence spans 526 residues: Light-independent protochlorophyllide reductase subunit B (526 aa).

Residue D36 coordinates [4Fe-4S] cluster. The active-site Proton donor is D284. 419–420 provides a ligand contact to substrate; it reads GL.

The protein belongs to the ChlB/BchB/BchZ family. Protochlorophyllide reductase is composed of three subunits; BchL, BchN and BchB. Forms a heterotetramer of two BchB and two BchN subunits. It depends on [4Fe-4S] cluster as a cofactor.

It catalyses the reaction chlorophyllide a + oxidized 2[4Fe-4S]-[ferredoxin] + 2 ADP + 2 phosphate = protochlorophyllide a + reduced 2[4Fe-4S]-[ferredoxin] + 2 ATP + 2 H2O. It participates in porphyrin-containing compound metabolism; bacteriochlorophyll biosynthesis (light-independent). Component of the dark-operative protochlorophyllide reductase (DPOR) that uses Mg-ATP and reduced ferredoxin to reduce ring D of protochlorophyllide (Pchlide) to form chlorophyllide a (Chlide). This reaction is light-independent. The NB-protein (BchN-BchB) is the catalytic component of the complex. The chain is Light-independent protochlorophyllide reductase subunit B from Halorhodospira halophila (strain DSM 244 / SL1) (Ectothiorhodospira halophila (strain DSM 244 / SL1)).